Consider the following 798-residue polypeptide: MLLSLKWLREFVPFEGTAAELGDRLTMLGLELEEIIRPFDAIEPIVVGHVVSRERHPEADKLSVCKVDVGQGEPLDIVCGAPNVAAGQRVPVALVGTTMPGGMVIKKAKLRGQPSHGMICSERELGLGEDHDGIMVLPESFRIGARLVDELDLDREVCDIAITPNRADCLSVLGLAREVALAFGLPLTMPALDLKEEGADASNALRIDIPDASLCPLFHGRVLEGAAVRKSPAWMRYRLIAVGVRPISNIVDVTNYILMELGQPLHAYDLDLLAGGRIEVSAAREGERLTTLDGVERVLTSNDLLIRDGEKPVGLAGVMGGAETEISDKSSRVFLEAAVFRPGTIRKTARRLGLSSEASYRFERGVDQVVCTYAMNRAAQLIAGLSGATLRPGICHNEPLPWQAPVLRFRRARGEALLGISLDETFCRETLERLGCKVDAADAADWKVTAPSHRRDFEREADLIEEVARVRGMDTIEPVLPKVMRPLDRAGAPESKYSFWLRLKHWAAGLGLNEAINYSFVGQKDLDHLNLAVDGRIPIMNPLTADQNVLRTELAPGLLQNLRHNIAQGNAGLRLFEVAHIFEADATSDTTARERARLDILVYGSRYDSQWPHVEADADYADIKGIVEHCLAFLHLEGATFTLAASHPFLMPCVDVAVQGRQVGVIGRVRPEIADAYHARKDAWLADLDLDVLRELHDAARIAFRSLPVYPPVRRDITVAAPGSLQVGAVLDHILGLRLPLLCGVELIDVFEPEGKDERNLTFRMTFRHASRTLKDAEVDKERDKVAHSLVEKLPVRI.

The tRNA-binding domain maps to 39 to 148 (FDAIEPIVVG…ESFRIGARLV (110 aa)). A B5 domain is found at 402–478 (WQAPVLRFRR…RVRGMDTIEP (77 aa)). Residues aspartate 456, aspartate 462, glutamate 465, and glutamate 466 each coordinate Mg(2+). The region spanning 708 to 798 (PVYPPVRRDI…SLVEKLPVRI (91 aa)) is the FDX-ACB domain.

Belongs to the phenylalanyl-tRNA synthetase beta subunit family. Type 1 subfamily. In terms of assembly, tetramer of two alpha and two beta subunits. Requires Mg(2+) as cofactor.

Its subcellular location is the cytoplasm. The catalysed reaction is tRNA(Phe) + L-phenylalanine + ATP = L-phenylalanyl-tRNA(Phe) + AMP + diphosphate + H(+). In Nitratidesulfovibrio vulgaris (strain ATCC 29579 / DSM 644 / CCUG 34227 / NCIMB 8303 / VKM B-1760 / Hildenborough) (Desulfovibrio vulgaris), this protein is Phenylalanine--tRNA ligase beta subunit.